The following is a 173-amino-acid chain: MKTWYMVVVIGFLATLAQTSLALKEEDCEVCVKTVRRFADSLDESTKKDYKQIETAFKKFCKTQKNKEHRFCYYLGGLEESATGILNELSKPLSWSMPAEKVCEKLKKKDAQVCDLRYEKQIDLNSVDLKKLKVRDLKKILNDWDESCDGCLEKGDFIKRIEELKPKYSRSEL.

The first 22 residues, Met1 to Ala22, serve as a signal peptide directing secretion. 4 disulfide bridges follow: Cys28–Cys114, Cys31–Cys103, Cys61–Cys72, and Cys148–Cys151.

It belongs to the ARMET family.

The protein resides in the secreted. In terms of biological role, required during the maturation of the embryonic nervous system for maintenance of neuronal and cuticular connectivity. Essential for maintenance of dopaminergic neurons and dopamine levels. The protein is Mesencephalic astrocyte-derived neurotrophic factor homolog of Drosophila erecta (Fruit fly).